Reading from the N-terminus, the 613-residue chain is Leucine-rich repeat and immunoglobulin-like domain-containing nogo receptor-interacting protein 1 (613 aa).

An N-terminal signal peptide occupies residues 1–34; the sequence is MLAGEASMRSPILACWQPILLLMLGSILSGSATG. 2 cysteine pairs are disulfide-bonded: Cys-35/Cys-41 and Cys-39/Cys-50. The 30-residue stretch at 35–64 folds into the LRRNT domain; sequence CPPRCECSAQERAVLCHRKRFMVVPEGIPT. The Extracellular segment spans residues 35–554; that stretch reads CPPRCECSAQ…FDIKTLIIAT (520 aa). LRR repeat units lie at residues 65-86, 89-110, 113-134, 137-158, 161-182, 185-206, 209-230, 257-278, 281-302, 305-326, and 329-350; these read ETRQ…EFAN, HLEE…AFNN, NLRT…VFTG, NLTK…MFQD, NLKS…AFSG, SLEQ…ALSH, GLIV…SFKR, NLTS…SVRH, YLRF…MLHD, RLQE…AFRG, and YLRI…AFHS. Asn-137 is a glycosylation site (N-linked (GlcNAc...) asparagine). A glycan (N-linked (GlcNAc...) asparagine) is linked at Asn-195. N-linked (GlcNAc...) asparagine glycosylation is found at Asn-257, Asn-267, and Asn-286. Asn-334 is a glycosylation site (N-linked (GlcNAc...) asparagine). In terms of domain architecture, LRRCT spans 362–416; it reads NPLACDCRLLWVFRRRWRLNFNKQQPTCSTPEFVQGKEFKDFPDVLLPNYFTCRR. 3 disulfide bridges follow: Cys-366–Cys-389, Cys-368–Cys-414, and Cys-439–Cys-490. Residues 404–508 form the Ig-like C2-type domain; it reads PDVLLPNYFT…DTMLAHLHVR (105 aa). 5 N-linked (GlcNAc...) asparagine glycosylation sites follow: Asn-485, Asn-498, Asn-519, Asn-530, and Asn-535. A helical membrane pass occupies residues 555–575; it reads TMGFISFLGVVLFCLVLLFLW. The Cytoplasmic portion of the chain corresponds to 576–613; that stretch reads SRGKGNTKHNIEIEYVPRKSDAGISSADAPRKFNMKMI.

In terms of assembly, homotetramer. Forms ternary complex with RTN4R/NGFR and RTN4R/TNFRSF19. Post-translationally, N-glycosylated. Contains predominantly high-mannose glycans.

The protein localises to the cell membrane. Functionally, functional component of the Nogo receptor signaling complex (RTN4R/NGFR) in RhoA activation responsible for some inhibition of axonal regeneration by myelin-associated factors. Is also an important negative regulator of oligodentrocyte differentiation and axonal myelination. The protein is Leucine-rich repeat and immunoglobulin-like domain-containing nogo receptor-interacting protein 1 (LINGO1) of Gallus gallus (Chicken).